The chain runs to 130 residues: Small ribosomal subunit protein uS8 (130 aa).

It belongs to the universal ribosomal protein uS8 family. As to quaternary structure, part of the 30S ribosomal subunit.

Functionally, one of the primary rRNA binding proteins, it binds directly to 16S rRNA central domain where it helps coordinate assembly of the platform of the 30S subunit. The protein is Small ribosomal subunit protein uS8 of Korarchaeum cryptofilum (strain OPF8).